The primary structure comprises 210 residues: Resolvase (210 aa).

Positions V6–G150 constitute a Resolvase/invertase-type recombinase catalytic domain. Residue S14 is the O-(5'-phospho-DNA)-serine intermediate of the active site. Positions G191–V210 form a DNA-binding region, H-T-H motif.

Belongs to the site-specific recombinase resolvase family.

In terms of biological role, site-specific recombination protein. The chain is Resolvase (stbA) from Pseudomonas syringae pv. tomato.